Consider the following 104-residue polypeptide: Intracellular chorismate mutase (104 aa).

The region spanning 23-104 (AVPEIDDLRR…LRLGRGRLGY (82 aa)) is the Chorismate mutase domain. Positions 59, 68, and 72 each coordinate chorismate.

Homodimer. Probably interacts with AroG (MSMEG_4244).

The protein resides in the cytoplasm. It catalyses the reaction chorismate = prephenate. It participates in metabolic intermediate biosynthesis; prephenate biosynthesis; prephenate from chorismate: step 1/1. With respect to regulation, the formation of the complex with AroG activates the chorismate mutase activity. In terms of biological role, catalyzes the Claisen rearrangement of chorismate to prephenate. Probably involved in the aromatic amino acid biosynthesis. This Mycolicibacterium smegmatis (strain ATCC 700084 / mc(2)155) (Mycobacterium smegmatis) protein is Intracellular chorismate mutase.